A 912-amino-acid polypeptide reads, in one-letter code: LPS-assembly protein LptD (912 aa).

Residues 1–27 form the signal peptide; sequence MLYSPLYQSIRLILFGALGLSSLTVSA.

This sequence belongs to the LptD family. As to quaternary structure, component of the lipopolysaccharide transport and assembly complex. Interacts with LptE and LptA.

It is found in the cell outer membrane. Together with LptE, is involved in the assembly of lipopolysaccharide (LPS) at the surface of the outer membrane. In Psychrobacter arcticus (strain DSM 17307 / VKM B-2377 / 273-4), this protein is LPS-assembly protein LptD.